Consider the following 684-residue polypeptide: DNA-directed RNA polymerase subunit beta' (684 aa).

Residues Cys-69, Cys-71, Cys-87, and Cys-90 each contribute to the Zn(2+) site. Mg(2+) is bound by residues Asp-489, Asp-491, and Asp-493.

It belongs to the RNA polymerase beta' chain family. RpoC1 subfamily. In terms of assembly, in plastids the minimal PEP RNA polymerase catalytic core is composed of four subunits: alpha, beta, beta', and beta''. When a (nuclear-encoded) sigma factor is associated with the core the holoenzyme is formed, which can initiate transcription. Mg(2+) is required as a cofactor. It depends on Zn(2+) as a cofactor.

The protein localises to the plastid. Its subcellular location is the chloroplast. It carries out the reaction RNA(n) + a ribonucleoside 5'-triphosphate = RNA(n+1) + diphosphate. DNA-dependent RNA polymerase catalyzes the transcription of DNA into RNA using the four ribonucleoside triphosphates as substrates. This is DNA-directed RNA polymerase subunit beta' from Morus indica (Mulberry).